Reading from the N-terminus, the 576-residue chain is V-type ATP synthase alpha chain (576 aa).

Residue Gly-238–Thr-245 coordinates ATP.

It belongs to the ATPase alpha/beta chains family.

It carries out the reaction ATP + H2O + 4 H(+)(in) = ADP + phosphate + 5 H(+)(out). Produces ATP from ADP in the presence of a proton gradient across the membrane. The V-type alpha chain is a catalytic subunit. This chain is V-type ATP synthase alpha chain, found in Borrelia duttonii (strain Ly).